Reading from the N-terminus, the 139-residue chain is Peptide methionine sulfoxide reductase MsrB (139 aa).

A MsrB domain is found at 8 to 130 (DQEWRQQLTD…NSASLRFHSA (123 aa)). Positions 47, 50, 96, and 99 each coordinate Zn(2+). C119 functions as the Nucleophile in the catalytic mechanism.

Belongs to the MsrB Met sulfoxide reductase family. Requires Zn(2+) as cofactor.

It catalyses the reaction L-methionyl-[protein] + [thioredoxin]-disulfide + H2O = L-methionyl-(R)-S-oxide-[protein] + [thioredoxin]-dithiol. This chain is Peptide methionine sulfoxide reductase MsrB, found in Hahella chejuensis (strain KCTC 2396).